The sequence spans 87 residues: Histone H1.C6/H1.C9 (87 aa).

The disordered stretch occupies residues 1 to 87 (MSDAAVPPKK…KKAVKKAPKK (87 aa)). The span at 11-87 (ASPKKASPKK…KKAVKKAPKK (77 aa)) shows a compositional bias: basic residues.

It is found in the nucleus. It localises to the chromosome. This chain is Histone H1.C6/H1.C9, found in Trypanosoma cruzi.